We begin with the raw amino-acid sequence, 205 residues long: RFTSAFSLGLLLVTATAFPTPGPLGEDFKDDTTSDRLYLTSPDKTEALIKYILGKISAMRKEMCEKYDKCENSKEALAENNLNLPKMAEKDGCFQSGFNQETCLMRITTGLLEYQIYLDYLQNEYEGDKEAIEAVQISSKALAQILRQKVKNPDEVTTPDPTTNASLMNNLQSQNDDWMKNTKIILILRSLENFLQFSLRAIRIK.

An N-terminal signal peptide occupies residues 1–21 (RFTSAFSLGLLLVTATAFPTP). C64 and C70 form a disulfide bridge. Residue S73 is modified to Phosphoserine. An intrachain disulfide couples C93 to C103. N-linked (GlcNAc...) asparagine glycosylation occurs at N164.

It belongs to the IL-6 superfamily. Component of a hexamer of two molecules each of IL6, IL6R and IL6ST; first binds to IL6R to associate with the signaling subunit IL6ST. Interacts with IL6R (via the N-terminal ectodomain); this interaction may be affected by IL6R-binding with SORL1, hence decreasing IL6 cis signaling. Interacts with SORL1 (via the N-terminal ectodomain); this interaction leads to IL6 internalization and lysosomal degradation. May form a trimeric complex with the soluble SORL1 ectodomain and soluble IL6R receptor; this interaction might stabilize circulating IL6, hence promoting IL6 trans signaling.

Its subcellular location is the secreted. Its function is as follows. Cytokine with a wide variety of biological functions in immunity, tissue regeneration, and metabolism. Binds to IL6R, then the complex associates to the signaling subunit IL6ST/gp130 to trigger the intracellular IL6-signaling pathway. The interaction with the membrane-bound IL6R and IL6ST stimulates 'classic signaling', whereas the binding of IL6 and soluble IL6R to IL6ST stimulates 'trans-signaling'. Alternatively, 'cluster signaling' occurs when membrane-bound IL6:IL6R complexes on transmitter cells activate IL6ST receptors on neighboring receiver cells. In terms of biological role, IL6 is a potent inducer of the acute phase response. Rapid production of IL6 contributes to host defense during infection and tissue injury, but excessive IL6 synthesis is involved in disease pathology. In the innate immune response, is synthesized by myeloid cells, such as macrophages and dendritic cells, upon recognition of pathogens through toll-like receptors (TLRs) at the site of infection or tissue injury. In the adaptive immune response, is required for the differentiation of B cells into immunoglobulin-secreting cells. Plays a major role in the differentiation of CD4(+) T cell subsets. Essential factor for the development of T follicular helper (Tfh) cells that are required for the induction of germinal-center formation. Required to drive naive CD4(+) T cells to the Th17 lineage. Also required for proliferation of myeloma cells and the survival of plasmablast cells. Acts as an essential factor in bone homeostasis and on vessels directly or indirectly by induction of VEGF, resulting in increased angiogenesis activity and vascular permeability. Induces, through 'trans-signaling' and synergistically with IL1B and TNF, the production of VEGF. Involved in metabolic controls, is discharged into the bloodstream after muscle contraction increasing lipolysis and improving insulin resistance. 'Trans-signaling' in central nervous system also regulates energy and glucose homeostasis. Mediates, through GLP-1, crosstalk between insulin-sensitive tissues, intestinal L cells and pancreatic islets to adapt to changes in insulin demand. Also acts as a myokine. Plays a protective role during liver injury, being required for maintenance of tissue regeneration. Also has a pivotal role in iron metabolism by regulating HAMP/hepcidin expression upon inflammation or bacterial infection. Through activation of IL6ST-YAP-NOTCH pathway, induces inflammation-induced epithelial regeneration. This is Interleukin-6 (IL6) from Orcinus orca (Killer whale).